The primary structure comprises 855 residues: Pre-mRNA-splicing factor SYF1 (855 aa).

HAT repeat units follow at residues leucine 15–glycine 47, alanine 48–alanine 80, proline 90–aspartate 122, glycine 124–serine 158, proline 160–arginine 192, glutamine 198–glutamine 230, valine 235–arginine 268, glycine 270–serine 305, and glycine 369–aspartate 407. The residue at position 420 (lysine 420) is an N6-acetyllysine. HAT repeat units lie at residues glycine 498–glutamate 530, lysine 532–alanine 566, arginine 571–glutamate 605, tyrosine 643–lysine 677, and glycine 679–arginine 713. The segment at leucine 810–aspartate 855 is disordered. A compositionally biased stretch (acidic residues) spans glutamine 820–proline 834. Phosphoserine is present on serine 851.

This sequence belongs to the crooked-neck family. In terms of assembly, associates with RNA polymerase II, the TCR-specific proteins CKN1/CSA and ERCC6/CSB, and XPA. Identified in the spliceosome C complex. Component of the XAB2 complex, a multimeric protein complex composed of XAB2, PRPF19, AQR, ZNF830, ISY1, and PPIE. Identified in a pentameric intron-binding (IB) complex composed of AQR, XAB2, ISY1, ZNF830 and PPIE that is incorporated into the spliceosome as a preassembled complex. The IB complex does not contain PRPF19.

It localises to the nucleus. Functionally, involved in pre-mRNA splicing as component of the spliceosome. Involved in transcription-coupled repair (TCR), transcription and pre-mRNA splicing. This Homo sapiens (Human) protein is Pre-mRNA-splicing factor SYF1 (XAB2).